The chain runs to 361 residues: Versatile peroxidase VPL2 (361 aa).

Positions 1–22 are cleaved as a signal peptide; sequence MSFKTLSALALALGAAVQFASA. The propeptide occupies 23–30; sequence AVPLVQKR. Disulfide bonds link Cys-33–Cys-45, Cys-44–Cys-308, Cys-64–Cys-144, and Cys-272–Cys-337. Positions 66 and 70 each coordinate Mn(2+). The active-site Proton acceptor is His-77. Ca(2+) is bound by residues Asp-78, Gly-90, Asp-92, and Ser-94. An N-linked (GlcNAc...) asparagine glycan is attached at Asn-126. Residue Trp-194 is the Tryptophan radical intermediate of the active site. His-199 provides a ligand contact to heme b. Residue Ser-200 participates in Ca(2+) binding. 203 to 207 provides a ligand contact to heme b; the sequence is AADKV. Residue Asp-205 participates in Mn(2+) binding. Residues Asp-217, Thr-219, Val-222, and Asp-224 each contribute to the Ca(2+) site.

The protein belongs to the peroxidase family. Ligninase subfamily. The cofactor is heme b. Requires Ca(2+) as cofactor.

Its subcellular location is the secreted. It catalyses the reaction 1-(4-hydroxy-3-methoxyphenyl)-2-(2-methoxyphenoxy)propane-1,3-diol + H2O2 = guaiacol + vanillin + glycolaldehyde + H2O. The catalysed reaction is 2 Mn(2+) + H2O2 + 2 H(+) = 2 Mn(3+) + 2 H2O. A versatile ligninolytic peroxidase that combines the substrate specificity characteristics of the two other ligninolytic peroxidases, manganese peroxidase and lignin peroxidase. The protein is Versatile peroxidase VPL2 (vpl2) of Pleurotus eryngii (Boletus of the steppes).